Reading from the N-terminus, the 288-residue chain is Glucose-1-phosphate thymidylyltransferase (288 aa).

DTDP-alpha-D-glucose is bound at residue Gly8. Positions 8, 11, 12, 13, 23, 24, 80, 85, and 108 each coordinate dTTP. DTDP-alpha-D-glucose contacts are provided by Lys23, Gln24, Gln80, Gly85, Asp108, Asn109, Gly143, Glu158, Lys159, Val169, and Asp222. Asp108 serves as a coordination point for Mg(2+). Asp222 contacts Mg(2+).

This sequence belongs to the glucose-1-phosphate thymidylyltransferase family. Mg(2+) is required as a cofactor.

The enzyme catalyses dTTP + alpha-D-glucose 1-phosphate + H(+) = dTDP-alpha-D-glucose + diphosphate. It participates in carbohydrate biosynthesis; dTDP-L-rhamnose biosynthesis. Functionally, catalyzes the conversion of glucose-1-phosphate and dTTP to dTDP-glucose and pyrophosphate. Involved in the biosynthesis of the dTDP-L-rhamnose which is a component of the critical linker, D-N-acetylglucosamine-L-rhamnose disaccharide, which connects the galactan region of arabinogalactan to peptidoglycan via a phosphodiester linkage. This chain is Glucose-1-phosphate thymidylyltransferase (rmlA), found in Mycobacterium tuberculosis (strain CDC 1551 / Oshkosh).